A 452-amino-acid polypeptide reads, in one-letter code: Pup--protein ligase (452 aa).

Residue E9 participates in Mg(2+) binding. Residue R53 coordinates ATP. Y55 contacts Mg(2+). Catalysis depends on D57, which acts as the Proton acceptor. E63 serves as a coordination point for Mg(2+). T66 and W419 together coordinate ATP.

Belongs to the Pup ligase/Pup deamidase family. Pup-conjugating enzyme subfamily. Pupylated at an undetermined lysine residue by the prokaryotic ubiquitin-like protein Pup, which leads to its degradation by the proteasome and thereby constitutes a negative auto-regulation.

It carries out the reaction ATP + [prokaryotic ubiquitin-like protein]-L-glutamate + [protein]-L-lysine = ADP + phosphate + N(6)-([prokaryotic ubiquitin-like protein]-gamma-L-glutamyl)-[protein]-L-lysine.. Its pathway is protein degradation; proteasomal Pup-dependent pathway. It functions in the pathway protein modification; protein pupylation. Functionally, catalyzes the covalent attachment of the prokaryotic ubiquitin-like protein modifier Pup to the proteasomal substrate proteins, thereby targeting them for proteasomal degradation. This tagging system is termed pupylation. The ligation reaction likely involves the side-chain carboxylate of the C-terminal glutamate of Pup and the side-chain amino group of a substrate lysine. This chain is Pup--protein ligase (pafA), found in Mycolicibacterium smegmatis (strain ATCC 700084 / mc(2)155) (Mycobacterium smegmatis).